Reading from the N-terminus, the 329-residue chain is Probable quinone oxidoreductase (329 aa).

Ser-191 is modified (phosphoserine).

It belongs to the zinc-containing alcohol dehydrogenase family. Quinone oxidoreductase subfamily.

Its subcellular location is the cytoplasm. It is found in the nucleus. It carries out the reaction 2 a quinone + NADPH + H(+) = 2 a 1,4-benzosemiquinone + NADP(+). This is Probable quinone oxidoreductase (zta1) from Schizosaccharomyces pombe (strain 972 / ATCC 24843) (Fission yeast).